Reading from the N-terminus, the 417-residue chain is GTP-binding protein YPT11 (417 aa).

The disordered stretch occupies residues 1–34 (MSQRKRYSLNVVTSPSIPSPTPSAPIRTNESNWE). Residues 97-104 (GDANVGKT), 228-232 (DTAGQ), and 292-295 (NKID) contribute to the GTP site. 2 S-geranylgeranyl cysteine lipidation sites follow: cysteine 415 and cysteine 416.

The protein belongs to the small GTPase superfamily. Rab family. As to quaternary structure, interacts with MYO2 (via C-terminal tail domain). Interacts with YIF1, YIP3, YIP4 and YIP5.

It is found in the endoplasmic reticulum membrane. The protein resides in the bud tip. It localises to the bud neck. In terms of biological role, involved in the positive control of both endoplasmic reticulum (ER) and mitochondrion inheritance during cell divison. Required for the MYO2-dependent retention of newly inherited mitochondria at the bud tip in developing daughter cells. In Saccharomyces cerevisiae (strain YJM789) (Baker's yeast), this protein is GTP-binding protein YPT11 (YPT11).